Reading from the N-terminus, the 141-residue chain is Hemoglobin subunit alpha (141 aa).

Residues 1-141 (VLSSADKNNI…VSTVLTSKYR (141 aa)) form the Globin domain. Serine 3 is modified (phosphoserine). Residues lysine 7 and lysine 11 each carry the N6-succinyllysine modification. Lysine 16 is subject to N6-acetyllysine; alternate. Lysine 16 is modified (N6-succinyllysine; alternate). Tyrosine 24 carries the phosphotyrosine modification. Serine 35 is subject to Phosphoserine. Lysine 40 carries the N6-succinyllysine modification. Serine 49 carries the phosphoserine modification. Histidine 58 contacts O2. Residue histidine 87 participates in heme b binding. Serine 102 bears the Phosphoserine mark. A phosphothreonine mark is found at threonine 108, threonine 134, and threonine 137. Serine 138 carries the phosphoserine modification.

This sequence belongs to the globin family. In terms of assembly, heterotetramer of two alpha chains and two beta chains. Red blood cells.

Involved in oxygen transport from the lung to the various peripheral tissues. Functionally, hemopressin acts as an antagonist peptide of the cannabinoid receptor CNR1. Hemopressin-binding efficiently blocks cannabinoid receptor CNR1 and subsequent signaling. The protein is Hemoglobin subunit alpha (HBA) of Paguma larvata (Masked palm civet).